Consider the following 208-residue polypeptide: Uracil phosphoribosyltransferase (208 aa).

5-phospho-alpha-D-ribose 1-diphosphate contacts are provided by residues R78, R103, and 130–138 (DPMLATGGS). Uracil-binding positions include I193 and 198-200 (GDA). Residue D199 coordinates 5-phospho-alpha-D-ribose 1-diphosphate.

It belongs to the UPRTase family. Mg(2+) serves as cofactor.

It catalyses the reaction UMP + diphosphate = 5-phospho-alpha-D-ribose 1-diphosphate + uracil. The protein operates within pyrimidine metabolism; UMP biosynthesis via salvage pathway; UMP from uracil: step 1/1. Allosterically activated by GTP. Catalyzes the conversion of uracil and 5-phospho-alpha-D-ribose 1-diphosphate (PRPP) to UMP and diphosphate. This is Uracil phosphoribosyltransferase from Neisseria meningitidis serogroup B (strain ATCC BAA-335 / MC58).